Consider the following 361-residue polypeptide: Peptide chain release factor 1 (361 aa).

An N5-methylglutamine modification is found at Gln-238.

Belongs to the prokaryotic/mitochondrial release factor family. In terms of processing, methylated by PrmC. Methylation increases the termination efficiency of RF1.

The protein localises to the cytoplasm. Its function is as follows. Peptide chain release factor 1 directs the termination of translation in response to the peptide chain termination codons UAG and UAA. The sequence is that of Peptide chain release factor 1 from Mesomycoplasma hyopneumoniae (strain 232) (Mycoplasma hyopneumoniae).